The following is a 186-amino-acid chain: Bilin biosynthesis protein CpeZ (186 aa).

Its function is as follows. Involved in the biosynthesis of bilin. The chain is Bilin biosynthesis protein CpeZ (cpeZ) from Synechococcus sp. (strain WH8020).